We begin with the raw amino-acid sequence, 388 residues long: Na(+)/H(+) antiporter NhaA (388 aa).

Helical transmembrane passes span 14-34 (TIGI…NSPL), 59-79 (LLLW…GLEI), 95-115 (TFPA…FASL), 125-145 (GWAI…SLLG), 154-174 (VFLM…IALF), 177-197 (TKLS…LFIM), 200-220 (MCVI…VSVL), 222-242 (SGVH…YRIN), 257-277 (GLHL…NAGV), 295-315 (IMLG…YLAV), 328-348 (LIQF…SLFI), and 362-382 (ADKL…YIVL).

Belongs to the NhaA Na(+)/H(+) (TC 2.A.33) antiporter family.

The protein localises to the cell inner membrane. The catalysed reaction is Na(+)(in) + 2 H(+)(out) = Na(+)(out) + 2 H(+)(in). In terms of biological role, na(+)/H(+) antiporter that extrudes sodium in exchange for external protons. The polypeptide is Na(+)/H(+) antiporter NhaA (Nitratiruptor sp. (strain SB155-2)).